A 124-amino-acid chain; its full sequence is uncharacterized protein (124 aa).

A helical transmembrane segment spans residues 2-22 (AIIIAIIAAVIVIAALITFNV). Residues 24–124 (NASPGPEKQE…ALLSMKNKKK (101 aa)) form a disordered region. 3 stretches are compositionally biased toward basic and acidic residues: residues 30–58 (EKQEATDRIAPPEEEKNEAHYPAEARAAE), 67–81 (DSPKEKRDTMGDDIY), and 89–113 (KHSDEVHAEEEVTEESDKMQDRSYR).

Its subcellular location is the membrane. This is an uncharacterized protein from Bacillus subtilis (strain 168).